Consider the following 427-residue polypeptide: Enolase (427 aa).

Q162 serves as a coordination point for (2R)-2-phosphoglycerate. E206 (proton donor) is an active-site residue. 3 residues coordinate Mg(2+): D243, E286, and D313. 4 residues coordinate (2R)-2-phosphoglycerate: K338, R367, S368, and K389. K338 functions as the Proton acceptor in the catalytic mechanism.

This sequence belongs to the enolase family. The cofactor is Mg(2+).

Its subcellular location is the cytoplasm. It is found in the secreted. It localises to the cell surface. It catalyses the reaction (2R)-2-phosphoglycerate = phosphoenolpyruvate + H2O. Its pathway is carbohydrate degradation; glycolysis; pyruvate from D-glyceraldehyde 3-phosphate: step 4/5. Functionally, catalyzes the reversible conversion of 2-phosphoglycerate (2-PG) into phosphoenolpyruvate (PEP). It is essential for the degradation of carbohydrates via glycolysis. This chain is Enolase, found in Methanopyrus kandleri (strain AV19 / DSM 6324 / JCM 9639 / NBRC 100938).